Consider the following 70-residue polypeptide: UPF0270 protein VIBHAR_00073 (70 aa).

Belongs to the UPF0270 family.

The sequence is that of UPF0270 protein VIBHAR_00073 from Vibrio campbellii (strain ATCC BAA-1116).